The following is a 274-amino-acid chain: Thiamine kinase (274 aa).

The protein belongs to the thiamine kinase family.

The enzyme catalyses thiamine + ATP = thiamine phosphate + ADP + H(+). The protein operates within cofactor biosynthesis; thiamine diphosphate biosynthesis; thiamine phosphate from thiamine: step 1/1. In terms of biological role, catalyzes the ATP-dependent phosphorylation of thiamine to thiamine phosphate. Is involved in thiamine salvage. In Escherichia coli O45:K1 (strain S88 / ExPEC), this protein is Thiamine kinase.